The sequence spans 1429 residues: MALQVLIAHTGLRLEVDTAQFSILDDLKTWVSKKTSIPPQHIVALNPHGRTVKITNLHTEKEIFVYDIRISSPGNTNLITPIPLPKRYAVPNAPNTIDDVQSITSWQELYKDRRNWAMRLVEDSGQMSSATLARYSEIDVIIKCLDAAVANLEISIKQIEPKYNDLKKWVAPALEEHGNLVERWEQYLDLAKSTPVSPSMVKFMTGREINKARPTLEDLIELDTAKKAGKLAPTAHRRFSDKANQLGNTASQMYQSLESLIANFETLMSRSALSHSTDSAQLLEDIEAVVKQMDSDYRAALGYGNTQRDVAQASKTASVHTEHLVPTLKKRVKEMEELLHYGTDARNSVASESAKFMRHVTEITSLHSNVKSQINVLNQSEDDMTTFDYLRLIHQLPYMYAAFVAEAVRRREWVDKVKTDSSTLANEMALFQDEESKRRRKWQKMIGSMYGPDLDTNVMGLEVNLLGEDTPWPALTKEDLTDFIQILQEQPVDQTVLDDIVKLVQELDSPTKQQSKRLKAFKNGSIHEAALGRSGLMIRGDDDLLQSLQEDKGKLENKLKTAESRVRRLEDLLHRQSQASRPGNLFQPQGSQQRERVNSASSVRSSRFDDRRRSSEGIDPLMRRITQLENELREEKQRSVNLQQELTTQSNNHEDVKGQHEDLKAQHEDLKGQMAEINTTKQDLLENMEALEREFVEERKNLEIEIKTLKARLEDTEDEIEQFDESRQHEKAGLVVRVEELEAELEQVNKQRQDDALKAQGQVEFLRKETRIQREQQEALEQQIQSAQEEVQNVSRKLSVAEEALDDHWQALTRLFSELSPDGTIPDNVVDLSNLLLTQAGTLVEKSRNSEADIELLKTQVEHFSSAISELREQVSQKDAKLSEDEMTVIHLRENIAEEQAKVSALEQELADGREQLTELRAKLSDGETGPEALQTRLEDEEKKVMTLTEEVASKQSHVGSLEEELRMFQEKVESLQGKISHMNSHYEHRDEKTKDLTQRLYSQNDRMCRLLERVGYAVTRKDGEMTVNKIPRAERNAQNLADSTDPSASIRKSGTLSRVLGDSVDLELLYWFNNSDMQAEDEKYEEFMNNLGKFDMELFSETVYRRIKEVEHMARKWQKEARSYRERAHILQKDSHEKIAFKHFREGDLALFLPTRNQQAGAWAAFNVGFPHYFLREQDAHRLRHREWLVARISRIQERVVDLSKSLQPSSETESINDEENDNPFQLSDGLHWYLIDALEDKPGAPSTPGMGKSTVAANTVEATANIHAHGVGGKGKSRESVTSIEGINKTLSKSLESRRSSTNSKKALPFQLGGTTLLKNSALASETNSLRAHNADTPSGTSPTQGGHLTSTNASLGQKNQRVDGPIRQPSDESSTQGGGAKADEQPRSVVQREDSVESPTRRSVVWDSLWSVDYNYESGSRRWLGG.

Coiled coils occupy residues 540–579 (GDDD…QSQA), 616–808 (EGID…LDDH), 842–985 (TLVE…HMNS), and 1106–1135 (RRIK…LQKD). A disordered region spans residues 574–622 (HRQSQASRPGNLFQPQGSQQRERVNSASSVRSSRFDDRRRSSEGIDPLM). The segment covering 575-592 (RQSQASRPGNLFQPQGSQ) has biased composition (polar residues). Residues 606–616 (SRFDDRRRSSE) show a composition bias toward basic and acidic residues. Disordered stretches follow at residues 1205–1224 (SKSL…ENDN) and 1333–1405 (RAHN…PTRR). Polar residues-rich tracts occupy residues 1206–1215 (KSLQPSSETE) and 1333–1362 (RAHN…GQKN). A compositionally biased stretch (basic and acidic residues) spans 1384 to 1398 (KADEQPRSVVQREDS).

This sequence belongs to the ATG11 family. Homodimer and potential homooligomers. Interacts with ATG1 kinase and the ATG19 and ATG34 cargo protein transporters. Interacts with ATG9, ATG17 and ATG20.

The protein resides in the preautophagosomal structure membrane. It localises to the vacuole membrane. In terms of biological role, involved in cytoplasm to vacuole transport (Cvt), pexophagy, mitophagy and nucleophagy. Recruits mitochondria for their selective degradation via autophagy (mitophagy) during starvation, through its interaction with ATG32. Works as scaffold proteins that recruit ATG proteins to the pre-autophagosome (PAS), the site of vesicle/autophagosome formation. Required for ATG9 anterograde transport from the mitochondria to the PAS. Also recruits the ATG19-prAPE1 complex to the PAS. Required for the Cvt vesicles completion. Autophagy is required for proper vegetative growth, asexual/sexual reproduction, and full virulence. Autophagy is particularly involved in the biosynthesis of deoxynivalenol (DON), an important virulence determinant. The chain is Autophagy-related protein 11 from Gibberella zeae (strain ATCC MYA-4620 / CBS 123657 / FGSC 9075 / NRRL 31084 / PH-1) (Wheat head blight fungus).